The sequence spans 352 residues: uncharacterized protein (352 aa).

N14, N52, and N70 each carry an N-linked (GlcNAc...) asparagine glycan. The interval 41 to 73 is disordered; sequence LSDYKKNKDTLNNSNNNINQPFENSNNFNNNSK. Over residues 50–72 the composition is skewed to low complexity; that stretch reads TLNNSNNNINQPFENSNNFNNNS. The helical transmembrane segment at 131-151 threads the bilayer; sequence IIFKSSGLLITLLVLYLGTFF. Residues N165, N186, N192, N193, N203, and N289 are each glycosylated (N-linked (GlcNAc...) asparagine). Positions 193 to 213 are enriched in low complexity; it reads NSSNSNNNNINNSNNNNNNNN. A disordered region spans residues 193–219; sequence NSSNSNNNNINNSNNNNNNNNRILSPN.

It is found in the membrane. This is an uncharacterized protein from Dictyostelium discoideum (Social amoeba).